The chain runs to 108 residues: UPF0060 membrane protein CKO_01576 (108 aa).

The next 4 helical transmembrane spans lie at 6–26, 29–49, 61–81, and 85–105; these read LLFF…WLWL, GATA…VWLL, AAYG…VDGV, and LYDW…VAGW.

Belongs to the UPF0060 family.

It localises to the cell inner membrane. The chain is UPF0060 membrane protein CKO_01576 from Citrobacter koseri (strain ATCC BAA-895 / CDC 4225-83 / SGSC4696).